A 196-amino-acid chain; its full sequence is Peptidyl-tRNA hydrolase (196 aa).

Y18 contacts tRNA. H23 acts as the Proton acceptor in catalysis. Residues F69, N71, and N117 each contribute to the tRNA site.

Belongs to the PTH family. Monomer.

It is found in the cytoplasm. The enzyme catalyses an N-acyl-L-alpha-aminoacyl-tRNA + H2O = an N-acyl-L-amino acid + a tRNA + H(+). Functionally, hydrolyzes ribosome-free peptidyl-tRNAs (with 1 or more amino acids incorporated), which drop off the ribosome during protein synthesis, or as a result of ribosome stalling. In terms of biological role, catalyzes the release of premature peptidyl moieties from peptidyl-tRNA molecules trapped in stalled 50S ribosomal subunits, and thus maintains levels of free tRNAs and 50S ribosomes. The chain is Peptidyl-tRNA hydrolase from Marinobacter nauticus (strain ATCC 700491 / DSM 11845 / VT8) (Marinobacter aquaeolei).